We begin with the raw amino-acid sequence, 72 residues long: Large ribosomal subunit protein uL29 (72 aa).

It belongs to the universal ribosomal protein uL29 family.

The polypeptide is Large ribosomal subunit protein uL29 (Prochlorococcus marinus (strain MIT 9215)).